The primary structure comprises 461 residues: Fumarate hydratase class II (461 aa).

Substrate-binding positions include 97–99 (SGT), 127–130 (HPND), 137–139 (SSN), and T185. The active-site Proton donor/acceptor is H186. Residue S316 is part of the active site. Residues S317 and 322-324 (KVN) contribute to the substrate site.

This sequence belongs to the class-II fumarase/aspartase family. Fumarase subfamily. In terms of assembly, homotetramer.

The protein resides in the cytoplasm. It carries out the reaction (S)-malate = fumarate + H2O. Its pathway is carbohydrate metabolism; tricarboxylic acid cycle; (S)-malate from fumarate: step 1/1. In terms of biological role, involved in the TCA cycle. Catalyzes the stereospecific interconversion of fumarate to L-malate. The chain is Fumarate hydratase class II from Oceanobacillus iheyensis (strain DSM 14371 / CIP 107618 / JCM 11309 / KCTC 3954 / HTE831).